The chain runs to 442 residues: Divalent metal cation transporter MntH (442 aa).

Transmembrane regions (helical) follow at residues 29-49 (MLAYAGPGYLVSVGYIDPGNW), 62-82 (TLLTVILLSNLMAILLQSLCV), 106-126 (FCLWVLCEIAIAACDLAELLG), 135-155 (FVIPLIWGVCITALDVLVLLF), 166-186 (ALVIMLVATVGICFTAEILFS), 209-229 (MLYIAIGILGATVMPHNLYLH), 258-278 (FALSLALFINSAILIVSAATF), 295-315 (LLSPLLGVSAASAIFGIALLA), 347-367 (LITRLLAIIPALITIILFGEN), 372-392 (LIVLSQVILSLQLPFAVIPLV), and 413-433 (LAWLVAIVIVGLNAWLLLQSL).

Belongs to the NRAMP family.

The protein localises to the cell inner membrane. In terms of biological role, h(+)-stimulated, divalent metal cation uptake system. This Nostoc sp. (strain PCC 7120 / SAG 25.82 / UTEX 2576) protein is Divalent metal cation transporter MntH.